Here is a 610-residue protein sequence, read N- to C-terminus: UvrABC system protein C (610 aa).

A GIY-YIG domain is found at 16–94 (SQPGVYRMYD…IKLYQPRYNV (79 aa)). One can recognise a UVR domain in the interval 204-239 (DQVLTQLIARMEKASQDLAFEEAARIRDQIQAVRRV).

This sequence belongs to the UvrC family. Interacts with UvrB in an incision complex.

Its subcellular location is the cytoplasm. In terms of biological role, the UvrABC repair system catalyzes the recognition and processing of DNA lesions. UvrC both incises the 5' and 3' sides of the lesion. The N-terminal half is responsible for the 3' incision and the C-terminal half is responsible for the 5' incision. This is UvrABC system protein C from Salmonella typhimurium (strain LT2 / SGSC1412 / ATCC 700720).